A 128-amino-acid chain; its full sequence is Arginine decarboxylase proenzyme (128 aa).

The active-site Schiff-base intermediate with substrate; via pyruvic acid is S76. A Pyruvic acid (Ser); by autocatalysis modification is found at S76. H81 serves as the catalytic Proton acceptor; for processing activity. The active-site Proton donor; for catalytic activity is the C96.

This sequence belongs to the prokaryotic AdoMetDC family. Type 1 subfamily. As to quaternary structure, heterooctamer of four alpha and four beta chains arranged as a tetramer of alpha/beta heterodimers. Pyruvate is required as a cofactor. Post-translationally, is synthesized initially as an inactive proenzyme. Formation of the active enzyme involves a self-maturation process in which the active site pyruvoyl group is generated from an internal serine residue via an autocatalytic post-translational modification. Two non-identical subunits are generated from the proenzyme in this reaction, and the pyruvate is formed at the N-terminus of the alpha chain, which is derived from the carboxyl end of the proenzyme. The post-translation cleavage follows an unusual pathway, termed non-hydrolytic serinolysis, in which the side chain hydroxyl group of the serine supplies its oxygen atom to form the C-terminus of the beta chain, while the remainder of the serine residue undergoes an oxidative deamination to produce ammonia and the pyruvoyl group blocking the N-terminus of the alpha chain.

The catalysed reaction is L-arginine + H(+) = agmatine + CO2. It participates in amine and polyamine biosynthesis; agmatine biosynthesis; agmatine from L-arginine: step 1/1. Functionally, specifically catalyzes the decarboxylation of L-arginine to agmatine. Has no S-adenosylmethionine decarboxylase (AdoMetDC) activity. This Metallosphaera sedula (strain ATCC 51363 / DSM 5348 / JCM 9185 / NBRC 15509 / TH2) protein is Arginine decarboxylase proenzyme.